We begin with the raw amino-acid sequence, 337 residues long: MAVEMFYDADADLSIIQGRKVAVIGYGSQGHAHSLSLRDSGVEVKVGLKEGSKSRDKVTEQGLDVDTPAEVAKWADVIMLLAPDTAQAEIFTKDIEPNLEDGNALFFGHGLNIHFGLIKPPANVTIGMVAPKGPGHLVRRQFVDGKGVPCLIAVDQDPKGEGQALALSYAAAIGGARAGVIKTTFKDETETDLFGEQAVLCGGTEELVKTGFDVMVEAGYEPELAYFEVLHELKLIVDLMYEGGIARMNYSVSDTAEFGGYLSGPRVIDADTKKRMQDILKDIQDGTFVKRLVANVEGGNKELEGLRKQNAEHPIEVTGKKLRDLMSWVDRPITETA.

The KARI N-terminal Rossmann domain maps to 3 to 183 (VEMFYDADAD…GGARAGVIKT (181 aa)). NADP(+) contacts are provided by residues 26 to 29 (YGSQ), lysine 49, serine 52, serine 54, and 84 to 87 (DTAQ). The active site involves histidine 109. Position 135 (glycine 135) interacts with NADP(+). Residues 184–329 (TFKDETETDL…KKLRDLMSWV (146 aa)) enclose the KARI C-terminal knotted domain. The Mg(2+) site is built by aspartate 192, glutamate 196, glutamate 228, and glutamate 232. Substrate is bound at residue serine 253.

This sequence belongs to the ketol-acid reductoisomerase family. The cofactor is Mg(2+).

The enzyme catalyses (2R)-2,3-dihydroxy-3-methylbutanoate + NADP(+) = (2S)-2-acetolactate + NADPH + H(+). It carries out the reaction (2R,3R)-2,3-dihydroxy-3-methylpentanoate + NADP(+) = (S)-2-ethyl-2-hydroxy-3-oxobutanoate + NADPH + H(+). It participates in amino-acid biosynthesis; L-isoleucine biosynthesis; L-isoleucine from 2-oxobutanoate: step 2/4. The protein operates within amino-acid biosynthesis; L-valine biosynthesis; L-valine from pyruvate: step 2/4. Its function is as follows. Involved in the biosynthesis of branched-chain amino acids (BCAA). Catalyzes an alkyl-migration followed by a ketol-acid reduction of (S)-2-acetolactate (S2AL) to yield (R)-2,3-dihydroxy-isovalerate. In the isomerase reaction, S2AL is rearranged via a Mg-dependent methyl migration to produce 3-hydroxy-3-methyl-2-ketobutyrate (HMKB). In the reductase reaction, this 2-ketoacid undergoes a metal-dependent reduction by NADPH to yield (R)-2,3-dihydroxy-isovalerate. This is Ketol-acid reductoisomerase (NADP(+)) from Mycolicibacterium gilvum (strain PYR-GCK) (Mycobacterium gilvum (strain PYR-GCK)).